The following is a 356-amino-acid chain: UDP-N-acetylglucosamine--N-acetylmuramyl-(pentapeptide) pyrophosphoryl-undecaprenol N-acetylglucosamine transferase (356 aa).

Residues 15–17 (TGG), Asn-127, Arg-163, Ser-191, Ile-244, 263–268 (ALTVSE), and Gln-288 contribute to the UDP-N-acetyl-alpha-D-glucosamine site.

Belongs to the glycosyltransferase 28 family. MurG subfamily.

Its subcellular location is the cell inner membrane. It catalyses the reaction di-trans,octa-cis-undecaprenyl diphospho-N-acetyl-alpha-D-muramoyl-L-alanyl-D-glutamyl-meso-2,6-diaminopimeloyl-D-alanyl-D-alanine + UDP-N-acetyl-alpha-D-glucosamine = di-trans,octa-cis-undecaprenyl diphospho-[N-acetyl-alpha-D-glucosaminyl-(1-&gt;4)]-N-acetyl-alpha-D-muramoyl-L-alanyl-D-glutamyl-meso-2,6-diaminopimeloyl-D-alanyl-D-alanine + UDP + H(+). It participates in cell wall biogenesis; peptidoglycan biosynthesis. Functionally, cell wall formation. Catalyzes the transfer of a GlcNAc subunit on undecaprenyl-pyrophosphoryl-MurNAc-pentapeptide (lipid intermediate I) to form undecaprenyl-pyrophosphoryl-MurNAc-(pentapeptide)GlcNAc (lipid intermediate II). The polypeptide is UDP-N-acetylglucosamine--N-acetylmuramyl-(pentapeptide) pyrophosphoryl-undecaprenol N-acetylglucosamine transferase (Yersinia pestis (strain Pestoides F)).